We begin with the raw amino-acid sequence, 206 residues long: dTTP/UTP pyrophosphatase (206 aa).

Catalysis depends on Asp79, which acts as the Proton acceptor.

It belongs to the Maf family. YhdE subfamily. A divalent metal cation is required as a cofactor.

The protein localises to the cytoplasm. The enzyme catalyses dTTP + H2O = dTMP + diphosphate + H(+). It carries out the reaction UTP + H2O = UMP + diphosphate + H(+). In terms of biological role, nucleoside triphosphate pyrophosphatase that hydrolyzes dTTP and UTP. May have a dual role in cell division arrest and in preventing the incorporation of modified nucleotides into cellular nucleic acids. This Rhizobium meliloti (strain 1021) (Ensifer meliloti) protein is dTTP/UTP pyrophosphatase.